Here is a 223-residue protein sequence, read N- to C-terminus: DNA mismatch repair protein MutH (223 aa).

The protein belongs to the MutH family.

The protein resides in the cytoplasm. In terms of biological role, sequence-specific endonuclease that cleaves unmethylated GATC sequences. It is involved in DNA mismatch repair. The chain is DNA mismatch repair protein MutH from Shewanella sp. (strain W3-18-1).